Consider the following 422-residue polypeptide: Probable ornithine aminotransferase, mitochondrial (422 aa).

K273 bears the N6-(pyridoxal phosphate)lysine mark.

It belongs to the class-III pyridoxal-phosphate-dependent aminotransferase family. The cofactor is pyridoxal 5'-phosphate.

Its subcellular location is the mitochondrion matrix. The catalysed reaction is a 2-oxocarboxylate + L-ornithine = L-glutamate 5-semialdehyde + an L-alpha-amino acid. Its pathway is amino-acid biosynthesis; L-proline biosynthesis; L-glutamate 5-semialdehyde from L-ornithine: step 1/1. The polypeptide is Probable ornithine aminotransferase, mitochondrial (Caenorhabditis elegans).